A 433-amino-acid polypeptide reads, in one-letter code: 23S rRNA (uracil(1939)-C(5))-methyltransferase RlmD (433 aa).

Positions 1–53 constitute a TRAM domain; that stretch reads MPTAVIESLDHEGRGIARVEGKAVFIEGGLPGETVEYRVLRSKPNYEQAEATR. [4Fe-4S] cluster contacts are provided by Cys66, Cys72, Cys75, and Cys154. S-adenosyl-L-methionine-binding residues include Gln263, Phe292, Asn297, Glu313, Asn341, and Asp362. Residue Cys389 is the Nucleophile of the active site.

This sequence belongs to the class I-like SAM-binding methyltransferase superfamily. RNA M5U methyltransferase family. RlmD subfamily.

It carries out the reaction uridine(1939) in 23S rRNA + S-adenosyl-L-methionine = 5-methyluridine(1939) in 23S rRNA + S-adenosyl-L-homocysteine + H(+). In terms of biological role, catalyzes the formation of 5-methyl-uridine at position 1939 (m5U1939) in 23S rRNA. The protein is 23S rRNA (uracil(1939)-C(5))-methyltransferase RlmD of Azoarcus sp. (strain BH72).